The following is a 500-amino-acid chain: NAD(P)H-quinone oxidoreductase chain 4, chloroplastic (500 aa).

The next 14 membrane-spanning stretches (helical) occupy residues 4 to 24 (FPWL…IFFL), 37 to 57 (IGIC…FFQL), 87 to 107 (IGPI…AWPV), 113 to 130 (LFHF…GLFS), 134 to 154 (LLLF…LLSM), 167 to 187 (FILY…GMGL), 208 to 228 (ALEI…LPII), 242 to 262 (HYST…YGLI), 272 to 292 (AHSI…IYAA), 305 to 325 (IAYS…SITD), 330 to 350 (GAVL…FLAG), 386 to 406 (LALP…GIIT), 416 to 436 (VLIT…SLSM), and 462 to 482 (LFIS…PDFV).

This sequence belongs to the complex I subunit 4 family.

It localises to the plastid. Its subcellular location is the chloroplast thylakoid membrane. It catalyses the reaction a plastoquinone + NADH + (n+1) H(+)(in) = a plastoquinol + NAD(+) + n H(+)(out). The enzyme catalyses a plastoquinone + NADPH + (n+1) H(+)(in) = a plastoquinol + NADP(+) + n H(+)(out). The protein is NAD(P)H-quinone oxidoreductase chain 4, chloroplastic of Ceratophyllum demersum (Rigid hornwort).